We begin with the raw amino-acid sequence, 171 residues long: Small ribosomal subunit protein uS5 (171 aa).

The region spanning 15–78 (LEEKVVKINR…EKAKKQLVRI (64 aa)) is the S5 DRBM domain.

Belongs to the universal ribosomal protein uS5 family. In terms of assembly, part of the 30S ribosomal subunit. Contacts proteins S4 and S8.

In terms of biological role, with S4 and S12 plays an important role in translational accuracy. Its function is as follows. Located at the back of the 30S subunit body where it stabilizes the conformation of the head with respect to the body. The protein is Small ribosomal subunit protein uS5 of Onion yellows phytoplasma (strain OY-M).